A 181-amino-acid chain; its full sequence is Adenine phosphoribosyltransferase (181 aa).

Belongs to the purine/pyrimidine phosphoribosyltransferase family. As to quaternary structure, homodimer.

It localises to the cytoplasm. It carries out the reaction AMP + diphosphate = 5-phospho-alpha-D-ribose 1-diphosphate + adenine. It functions in the pathway purine metabolism; AMP biosynthesis via salvage pathway; AMP from adenine: step 1/1. In terms of biological role, catalyzes a salvage reaction resulting in the formation of AMP, that is energically less costly than de novo synthesis. The chain is Adenine phosphoribosyltransferase from Shewanella amazonensis (strain ATCC BAA-1098 / SB2B).